A 1720-amino-acid polypeptide reads, in one-letter code: 182 kDa tankyrase-1-binding protein (1720 aa).

Residues 1–137 are disordered; that stretch reads MKGSTLREGT…PPLTPPARCA (137 aa). Phosphoserine is present on Ser-14. Residues 117 to 127 show a composition bias toward basic and acidic residues; the sequence is SGKEDAGKEDL. Residue Thr-131 is modified to Phosphothreonine. Phosphoserine occurs at positions 178 and 220. Disordered regions lie at residues 185-472 and 485-595; these read SRLT…ESNW and RPSG…EDQE. The acidic stretch occupies residues 209 to 1563; sequence EEDSKSPAKG…TEILDSAMYR (1355 aa). Positions 232–243 are enriched in basic and acidic residues; it reads QEEHSKTPEERN. A Phosphothreonine modification is found at Thr-238. Residues 266-287 show a composition bias toward polar residues; the sequence is VSKTWVTSSADPVSEHGGSTSA. Residues Ser-286 and Ser-300 each carry the phosphoserine modification. Over residues 296-316 the composition is skewed to low complexity; that stretch reads PASESPRLSSRPSSPCHSQLS. Over residues 317 to 327 the composition is skewed to polar residues; sequence ETQSPAASEAS. A phosphoserine mark is found at Ser-429 and Ser-437. Residues 449–459 show a composition bias toward polar residues; that stretch reads TLPQGQGSQSA. Ser-496 and Ser-500 each carry phosphoserine. Over residues 502-518 the composition is skewed to low complexity; that stretch reads ITEASEAAEAAEADSWA. Residues Thr-503 and Thr-533 each carry the phosphothreonine modification. A phosphoserine mark is found at Ser-539, Ser-568, Ser-602, Ser-673, Ser-692, and Ser-713. Disordered stretches follow at residues 659 to 720, 734 to 924, and 955 to 1081; these read TTLP…CSEG, GVAT…EFEK, and SGGG…GWAG. Residues 742–758 are compositionally biased toward low complexity; sequence SSFGSSSWSQDTSQNYS. Phosphoserine occurs at positions 763, 796, 807, 845, 866, 871, 876, 887, 912, 976, 980, 1006, 1017, and 1022. Positions 840 to 866 are enriched in basic and acidic residues; sequence FGKRESQDPHSIHDKELQDQEFGKRDS. Positions 991–1014 are enriched in basic and acidic residues; it reads FEKKTPVGEDRFCEASRDVGHLEE. Positions 1027 to 1039 are enriched in basic and acidic residues; it reads HSRDGAARPKDEG. A phosphoserine mark is found at Ser-1047, Ser-1063, Ser-1084, Ser-1096, Ser-1126, Ser-1131, Ser-1171, Ser-1212, Ser-1241, and Ser-1246. The segment at 1128 to 1153 is disordered; the sequence is AGLSPSRKSGGGHFVPPGETKAGAVD. The interval 1198–1255 is disordered; sequence LARRLGTGESEEPRSLGVGEKDWTSSVEARNRDLPGQAEVGRHSQARESGVGEPDWSG. A compositionally biased stretch (basic and acidic residues) spans 1208–1230; that stretch reads EEPRSLGVGEKDWTSSVEARNRD. The residue at position 1275 (Thr-1275) is a Phosphothreonine. Phosphoserine occurs at positions 1290, 1321, 1324, 1373, and 1375. Positions 1358–1546 are disordered; sequence GRVGPDLELD…RGLLPSCPSE (189 aa). Residues 1402–1411 are compositionally biased toward polar residues; the sequence is EDSSSPSFET. A phosphoserine mark is found at Ser-1425, Ser-1429, Ser-1437, Ser-1440, Ser-1442, Ser-1463, and Ser-1466. Over residues 1428–1457 the composition is skewed to polar residues; the sequence is ASPSSCLTRSPPSGSQSLLEGIMTASSSKG. Residues 1440–1532 are tankyrase-binding; it reads SGSQSLLEGI…QNEQASAPPP (93 aa). Positions 1477–1489 are enriched in low complexity; it reads LAAGAGQGEPQEP. Residue Ser-1496 is modified to Phosphoserine. Positions 1515-1527 are enriched in polar residues; the sequence is WSLTGAARQNEQA. Ser-1549 bears the Phosphoserine mark. Thr-1554 bears the Phosphothreonine mark. The tract at residues 1567-1720 is disordered; it reads NLGRKRGHRA…QALKLKKKKI (154 aa). Positions 1568 to 1577 are enriched in basic residues; the sequence is LGRKRGHRAP. Positions 1593 to 1606 are enriched in basic and acidic residues; that stretch reads SDTRLFQDSTEPRA. Phosphoserine is present on residues Ser-1611, Ser-1612, and Ser-1622. Residues 1620-1626 carry the Nuclear localization signal motif; sequence PQSRRTR. Residue Lys-1635 is modified to N6-methyllysine. A phosphoserine mark is found at Ser-1643 and Ser-1657. The span at 1656–1670 shows a compositional bias: basic and acidic residues; that stretch reads RSAEEGEVTESKSSQ. Positions 1671–1690 are enriched in low complexity; sequence KESSVQRSKSCKVPGLGKPL. Phosphoserine is present on Ser-1706. A Nuclear localization signal motif is present at residues 1714–1719; sequence KLKKKK.

In terms of assembly, binds to the ANK repeat domain of TNKS1 and TNKS2. In terms of processing, ADP-ribosylated by TNKS1.

The protein resides in the nucleus. It localises to the cytoplasm. Its subcellular location is the cytoskeleton. It is found in the chromosome. The sequence is that of 182 kDa tankyrase-1-binding protein (Tnks1bp1) from Mus musculus (Mouse).